We begin with the raw amino-acid sequence, 463 residues long: L-seryl-tRNA(Sec) selenium transferase (463 aa).

At lysine 295 the chain carries N6-(pyridoxal phosphate)lysine.

The protein belongs to the SelA family. As to quaternary structure, homodecamer; pentamer of dimers. Binds only one seryl-tRNA(Sec) per dimer. The cofactor is pyridoxal 5'-phosphate.

It is found in the cytoplasm. The catalysed reaction is L-seryl-tRNA(Sec) + selenophosphate + H(+) = L-selenocysteinyl-tRNA(Sec) + phosphate. It participates in aminoacyl-tRNA biosynthesis; selenocysteinyl-tRNA(Sec) biosynthesis; selenocysteinyl-tRNA(Sec) from L-seryl-tRNA(Sec) (bacterial route): step 1/1. In terms of biological role, converts seryl-tRNA(Sec) to selenocysteinyl-tRNA(Sec) required for selenoprotein biosynthesis. The chain is L-seryl-tRNA(Sec) selenium transferase from Shigella flexneri serotype 5b (strain 8401).